A 511-amino-acid chain; its full sequence is 2,3-bisphosphoglycerate-independent phosphoglycerate mutase (511 aa).

Mn(2+) contacts are provided by aspartate 18 and serine 68. Serine 68 (phosphoserine intermediate) is an active-site residue. Substrate contacts are provided by residues histidine 129, 159–160 (RD), arginine 191, lysine 197, 261–264 (RSDR), and lysine 329. Residues aspartate 396, histidine 400, aspartate 437, histidine 438, and histidine 459 each contribute to the Mn(2+) site. The segment at 442-464 (ERMTKQAPDGSVRPYGGHTTNPV) is disordered.

This sequence belongs to the BPG-independent phosphoglycerate mutase family. In terms of assembly, monomer. Requires Mn(2+) as cofactor.

It catalyses the reaction (2R)-2-phosphoglycerate = (2R)-3-phosphoglycerate. The protein operates within carbohydrate degradation; glycolysis; pyruvate from D-glyceraldehyde 3-phosphate: step 3/5. Its function is as follows. Catalyzes the interconversion of 2-phosphoglycerate and 3-phosphoglycerate. The protein is 2,3-bisphosphoglycerate-independent phosphoglycerate mutase of Streptomyces coelicolor (strain ATCC BAA-471 / A3(2) / M145).